The following is a 458-amino-acid chain: Monomethylamine methyltransferase MtmB3 (458 aa).

Residue O202 is a non-standard amino acid, pyrrolysine.

The protein belongs to the monomethylamine methyltransferase family.

The enzyme catalyses Co(I)-[methylamine-specific corrinoid protein] + methylamine + H(+) = methyl-Co(III)-[methylamine-specific corrinoid protein] + NH4(+). Its pathway is one-carbon metabolism; methanogenesis from methylamine. Catalyzes the transfer of the methyl group from monomethylamine to the corrinoid cofactor of MtmC. This chain is Monomethylamine methyltransferase MtmB3 (mtmB3), found in Methanosarcina barkeri (strain Fusaro / DSM 804).